A 268-amino-acid polypeptide reads, in one-letter code: Large ribosomal subunit protein uL4 (268 aa).

Belongs to the universal ribosomal protein uL4 family. Part of the 50S ribosomal subunit.

In terms of biological role, one of the primary rRNA binding proteins, this protein initially binds near the 5'-end of the 23S rRNA. It is important during the early stages of 50S assembly. It makes multiple contacts with different domains of the 23S rRNA in the assembled 50S subunit and ribosome. Functionally, forms part of the polypeptide exit tunnel. In Nanoarchaeum equitans (strain Kin4-M), this protein is Large ribosomal subunit protein uL4.